The following is a 404-amino-acid chain: Propionate kinase (404 aa).

The protein belongs to the acetokinase family. PduW subfamily.

The protein localises to the cytoplasm. The catalysed reaction is propanoate + ATP = propanoyl phosphate + ADP. It functions in the pathway polyol metabolism; 1,2-propanediol degradation. Works with phosphate acetyltransferase (pta) to capture exogenous propionate and regenerate propionyl-CoA during degradation of 1,2-propanediol (1,2-PD). The protein is Propionate kinase of Escherichia fergusonii (strain ATCC 35469 / DSM 13698 / CCUG 18766 / IAM 14443 / JCM 21226 / LMG 7866 / NBRC 102419 / NCTC 12128 / CDC 0568-73).